The sequence spans 502 residues: Glycerol kinase (502 aa).

T14 lines the ADP pocket. ATP contacts are provided by T14, T15, and S16. T14 contacts sn-glycerol 3-phosphate. R18 lines the ADP pocket. Sn-glycerol 3-phosphate is bound by residues R84, E85, and Y136. 3 residues coordinate glycerol: R84, E85, and Y136. H232 bears the Phosphohistidine; by HPr mark. D246 is a binding site for sn-glycerol 3-phosphate. The glycerol site is built by D246 and Q247. ADP contacts are provided by T268 and G311. 4 residues coordinate ATP: T268, G311, Q315, and G412. 2 residues coordinate ADP: G412 and N416.

It belongs to the FGGY kinase family. In terms of assembly, homotetramer and homodimer (in equilibrium). The phosphoenolpyruvate-dependent sugar phosphotransferase system (PTS), including enzyme I, and histidine-containing protein (HPr) are required for the phosphorylation, which leads to the activation of the enzyme.

The catalysed reaction is glycerol + ATP = sn-glycerol 3-phosphate + ADP + H(+). It functions in the pathway polyol metabolism; glycerol degradation via glycerol kinase pathway; sn-glycerol 3-phosphate from glycerol: step 1/1. Activated by phosphorylation and inhibited by fructose 1,6-bisphosphate (FBP). Key enzyme in the regulation of glycerol uptake and metabolism. Catalyzes the phosphorylation of glycerol to yield sn-glycerol 3-phosphate. The protein is Glycerol kinase of Streptococcus pneumoniae (strain P1031).